We begin with the raw amino-acid sequence, 314 residues long: Ribonuclease Z (314 aa).

Zn(2+) is bound by residues His61, His63, Asp65, His66, His137, Asp207, and His263. Asp65 (proton acceptor) is an active-site residue.

It belongs to the RNase Z family. In terms of assembly, homodimer. Zn(2+) serves as cofactor.

The catalysed reaction is Endonucleolytic cleavage of RNA, removing extra 3' nucleotides from tRNA precursor, generating 3' termini of tRNAs. A 3'-hydroxy group is left at the tRNA terminus and a 5'-phosphoryl group is left at the trailer molecule.. Its function is as follows. Zinc phosphodiesterase, which displays some tRNA 3'-processing endonuclease activity. Probably involved in tRNA maturation, by removing a 3'-trailer from precursor tRNA. The protein is Ribonuclease Z of Thermococcus kodakarensis (strain ATCC BAA-918 / JCM 12380 / KOD1) (Pyrococcus kodakaraensis (strain KOD1)).